Reading from the N-terminus, the 267-residue chain is MEMO1 family protein MM_1761 (267 aa).

It belongs to the MEMO1 family.

In Methanosarcina mazei (strain ATCC BAA-159 / DSM 3647 / Goe1 / Go1 / JCM 11833 / OCM 88) (Methanosarcina frisia), this protein is MEMO1 family protein MM_1761.